A 275-amino-acid chain; its full sequence is MTTFKAILLGIVQGLTEFLPVSSSGHLAVTQHLLGVPEDRILFLTILLHVGTLFSVFFVYADDIFMICKEFILMIVDLLTGKGIRVNNQYRKLGLLIIVATIPTGIIGLFFKDLFTSFYNSTLIIGISLLVTGTLLWTAEKVNTGKRDIKDMNWFDAVIVGLFQGLAITPGISRSGSTIVGSLFRGFNKELATKFSFLISIPAILGATVFEVKDVLEVGLGDFTLTMLIAGVLASFLSGVFAIRTLINFIKKEKLYYFSYYTWTVGSIVILFSLL.

7 helical membrane-spanning segments follow: residues 1–21, 41–61, 95–115, 118–138, 192–212, 223–243, and 255–275; these read MTTF…FLPV, ILFL…FVYA, LLII…KDLF, FYNS…LLWT, ATKF…VFEV, FTLT…VFAI, and LYYF…FSLL.

The protein belongs to the UppP family.

Its subcellular location is the cell membrane. It carries out the reaction di-trans,octa-cis-undecaprenyl diphosphate + H2O = di-trans,octa-cis-undecaprenyl phosphate + phosphate + H(+). Functionally, catalyzes the dephosphorylation of undecaprenyl diphosphate (UPP). Confers resistance to bacitracin. This is Undecaprenyl-diphosphatase from Alkaliphilus metalliredigens (strain QYMF).